The chain runs to 143 residues: Root meristem growth factor 10 (143 aa).

The first 27 residues, M1–S27, serve as a signal peptide directing secretion. The propeptide occupies R28–L130. Residue N60 is glycosylated (N-linked (GlcNAc...) asparagine). Over residues N74–G83 the composition is skewed to polar residues. Residues N74–N143 are disordered. A Nuclear localization signal motif is present at residues V92–K99. At Y132 the chain carries Sulfotyrosine. A Hydroxyproline modification is found at P140.

Belongs to the RGF family. Binds to LRR receptor-like serine/threonine-protein kinases RGI1, RGI2 and RGI3 to trigger their dimerization with SERK proteins and subsequent signaling. In terms of processing, the tyrosine sulfation is critical for the function of the peptide. As to expression, expressed in root tips.

It is found in the secreted. It localises to the nucleus. Its function is as follows. Maintains the postembryonic root stem cell niche by regulating the expression levels and patterns of the transcription factor PLETHORA (PLT), mainly at the post-transcriptional level. Promotes root elongation. The sequence is that of Root meristem growth factor 10 from Arabidopsis thaliana (Mouse-ear cress).